Here is a 235-residue protein sequence, read N- to C-terminus: Glucosamine-6-phosphate deaminase (235 aa).

The active-site Proton acceptor; for enolization step is aspartate 62. Asparagine 128 serves as the catalytic For ring-opening step. Histidine 130 functions as the Proton acceptor; for ring-opening step in the catalytic mechanism. Glutamate 135 functions as the For ring-opening step in the catalytic mechanism.

This sequence belongs to the glucosamine/galactosamine-6-phosphate isomerase family. NagB subfamily.

The catalysed reaction is alpha-D-glucosamine 6-phosphate + H2O = beta-D-fructose 6-phosphate + NH4(+). It functions in the pathway amino-sugar metabolism; N-acetylneuraminate degradation; D-fructose 6-phosphate from N-acetylneuraminate: step 5/5. Functionally, catalyzes the reversible isomerization-deamination of glucosamine 6-phosphate (GlcN6P) to form fructose 6-phosphate (Fru6P) and ammonium ion. This chain is Glucosamine-6-phosphate deaminase, found in Streptococcus pneumoniae (strain JJA).